Consider the following 373-residue polypeptide: Glutamine synthetase (373 aa).

The residue at position 2 (A2) is an N-acetylalanine. The tract at residues 2-25 is required for glutamine-induced ubiquitination by CRL4(CRBN) and proteasomal degradation; sequence ATSASSHLNKGIKQVYMALPQGDK. Residues K11 and K14 each carry the N6-acetyllysine modification. The GS beta-grasp domain maps to 26–106; that stretch reads VQAMYIWIDG…VFCEVFKYNR (81 aa). A Phosphotyrosine modification is found at Y104. The region spanning 113-373 is the GS catalytic domain; that stretch reads LRHTCKRIMD…TGDEPFQYKN (261 aa). ATP is bound at residue E134. Mn(2+) is bound by residues E134, E136, E196, and E203. 203 to 208 contributes to the ATP binding site; sequence EFQIGP. 246-247 is an L-glutamate binding site; the sequence is NW. A Mn(2+)-binding site is contributed by H253. ATP is bound by residues 255-257, R319, and R324; that span reads NFS. R319 serves as a coordination point for L-glutamate. 336-338 lines the ADP pocket; that stretch reads YFE. E338 is a binding site for Mn(2+). L-glutamate is bound at residue R340. Phosphoserine is present on S343.

Belongs to the glutamine synthetase family. Decamer; composed of two pentamers. Interacts with PALMD. Interacts with RHOJ. Interacts with BEST2; this interaction tethers a fraction of GLUL to the membrane, causing a decrease of cytosolic glutamine synthase (GS) activity and inhibits the chloride channel activity of BEST2 by affecting the gating at the aperture in the absence of intracellular glutamate. Requires Mg(2+) as cofactor. The cofactor is Mn(2+). In terms of processing, palmitoylated; undergoes autopalmitoylation. Post-translationally, acetylated by EP300/p300; acetylation is stimulated by increased glutamine levels and promotes ubiquitin-mediated proteasomal degradation. Ubiquitinated by ZNRF1. Ubiquitinated by the DCX (DDB1-CUL4-X-box) E3 ubiquitin-protein ligase complex called CRL4(CRBN), leading to proteasomal degradation.

The protein resides in the cytoplasm. It localises to the cytosol. Its subcellular location is the microsome. The protein localises to the mitochondrion. It is found in the cell membrane. It carries out the reaction L-glutamate + NH4(+) + ATP = L-glutamine + ADP + phosphate + H(+). The catalysed reaction is L-cysteinyl-[protein] + hexadecanoyl-CoA = S-hexadecanoyl-L-cysteinyl-[protein] + CoA. Its activity is regulated as follows. Glutamine synthetase activity is inhibited by methionine sulfoximine (MSO). In terms of biological role, glutamine synthetase that catalyzes the ATP-dependent conversion of glutamate and ammonia to glutamine. Its role depends on tissue localization: in the brain, it regulates the levels of toxic ammonia and converts neurotoxic glutamate to harmless glutamine, whereas in the liver, it is one of the enzymes responsible for the removal of ammonia. Plays a key role in ammonium detoxification during erythropoiesis: the glutamine synthetase activity is required to remove ammonium generated by porphobilinogen deaminase (HMBS) during heme biosynthesis to prevent ammonium accumulation and oxidative stress. Essential for proliferation of fetal skin fibroblasts. Independently of its glutamine synthetase activity, required for endothelial cell migration during vascular development. Involved in angiogenesis by regulating membrane localization and activation of the GTPase RHOJ, possibly by promoting RHOJ palmitoylation. May act as a palmitoyltransferase for RHOJ: able to autopalmitoylate and then transfer the palmitoyl group to RHOJ. Plays a role in ribosomal 40S subunit biogenesis. Through the interaction with BEST2, inhibits BEST2 channel activity by affecting the gating at the aperture in the absence of intracellular L-glutamate, but sensitizes BEST2 to intracellular L-glutamate, which promotes the opening of BEST2 and thus relieves its inhibitory effect on BEST2. This Bos taurus (Bovine) protein is Glutamine synthetase.